A 529-amino-acid chain; its full sequence is MSESSLQNEVAKRRTFAIISHPDAGKTTITEKVLLHGQQIQKAGTIKGKKSGQHAKSDWMQMEQERGISVTTSVMQFPYHNALVNLLDTPGHEDFSEDTYRTLTAVDSCLMVIDGAKGVEDRTIKLMEVTRLRDTPIITFMNKLDRDIRDPLELLDEVEDVLKIMCAPITWPIGSGKNFKGVYHLLKDETILYKTGQGHRIQEETIIKGLDNPELDEKLGVWADELREQIELVNGASNPFDKELFLAGELTPVFFGTALGNFGVDHMLDGLVDWAPKPQGRETDQQEGVSATSEDFSGFIFKIQANMDPRHRDRVAFMRIVSGKYEKGMKMRQVRTGKDVRISDALTFLAGDRSHVEEAYPGDIIGLHNHGTIQIGDTFTAGEDFKFSGIPNFAPELFRRIRLKDPLKQKQLLKGLVQLSEEGAVQVFRPLISNDLIVGAVGVLQFDVVVHRLRTEYKVDAMYENINVATARWVSSKDEKKLDEFRRRAEANLALDGGDNLTYIAPTMVNLSLAEERYPDIEFTHTREH.

A tr-type G domain is found at 11-279 (AKRRTFAIIS…GLVDWAPKPQ (269 aa)). GTP is bound by residues 20 to 27 (SHPDAGKT), 88 to 92 (DTPGH), and 142 to 145 (NKLD).

The protein belongs to the TRAFAC class translation factor GTPase superfamily. Classic translation factor GTPase family. PrfC subfamily.

The protein resides in the cytoplasm. Functionally, increases the formation of ribosomal termination complexes and stimulates activities of RF-1 and RF-2. It binds guanine nucleotides and has strong preference for UGA stop codons. It may interact directly with the ribosome. The stimulation of RF-1 and RF-2 is significantly reduced by GTP and GDP, but not by GMP. The polypeptide is Peptide chain release factor 3 (Idiomarina loihiensis (strain ATCC BAA-735 / DSM 15497 / L2-TR)).